Reading from the N-terminus, the 505-residue chain is Lysine--tRNA ligase, heat inducible (505 aa).

Residues K114 and K156 each carry the N6-acetyllysine modification. E415 and E422 together coordinate Mg(2+).

This sequence belongs to the class-II aminoacyl-tRNA synthetase family. In terms of assembly, homodimer. Requires Mg(2+) as cofactor.

It is found in the cytoplasm. It carries out the reaction tRNA(Lys) + L-lysine + ATP = L-lysyl-tRNA(Lys) + AMP + diphosphate. In Escherichia coli O157:H7, this protein is Lysine--tRNA ligase, heat inducible (lysU).